A 343-amino-acid polypeptide reads, in one-letter code: Nuclease EXOG, mitochondrial (343 aa).

Catalysis depends on histidine 121, which acts as the Proton acceptor. Residue asparagine 152 coordinates a divalent metal cation.

This sequence belongs to the DNA/RNA non-specific endonuclease family. In terms of assembly, homodimer. The cofactor is a divalent metal cation.

Its subcellular location is the mitochondrion inner membrane. Its function is as follows. Endo/exonuclease with nicking activity towards supercoiled DNA, a preference for single-stranded DNA and 5'-3' exonuclease activity. In Danio rerio (Zebrafish), this protein is Nuclease EXOG, mitochondrial (exog).